Here is a 217-residue protein sequence, read N- to C-terminus: Uridine kinase (217 aa).

An ATP-binding site is contributed by 17 to 24 (GASASGKS).

Belongs to the uridine kinase family.

The protein localises to the cytoplasm. The enzyme catalyses uridine + ATP = UMP + ADP + H(+). It catalyses the reaction cytidine + ATP = CMP + ADP + H(+). The protein operates within pyrimidine metabolism; CTP biosynthesis via salvage pathway; CTP from cytidine: step 1/3. Its pathway is pyrimidine metabolism; UMP biosynthesis via salvage pathway; UMP from uridine: step 1/1. This Haemophilus ducreyi (strain 35000HP / ATCC 700724) protein is Uridine kinase.